An 87-amino-acid polypeptide reads, in one-letter code: Small ribosomal subunit protein uS19 (87 aa).

The segment at 1–29 (MARSLKKGPFVDHHLQKKVDVQNKEGTKK) is disordered. Over residues 9–28 (PFVDHHLQKKVDVQNKEGTK) the composition is skewed to basic and acidic residues.

Belongs to the universal ribosomal protein uS19 family.

Functionally, protein S19 forms a complex with S13 that binds strongly to the 16S ribosomal RNA. The chain is Small ribosomal subunit protein uS19 from Protochlamydia amoebophila (strain UWE25).